A 406-amino-acid chain; its full sequence is Vacuole membrane protein 1 (406 aa).

Residues 1-21 (MAENGKNCDQRRVAMNKEHHN) are compositionally biased toward basic and acidic residues. Positions 1 to 35 (MAENGKNCDQRRVAMNKEHHNGNFTDPSSVNEKKR) are disordered. Position 2 is an N-acetylalanine (Ala-2). Over 2-43 (AENGKNCDQRRVAMNKEHHNGNFTDPSSVNEKKRREREERQN) the chain is Cytoplasmic. Residues 44–64 (IVLWRQPLITLQYFSLEILVI) form a helical membrane-spanning segment. Topologically, residues 65–77 (LKEWTSKLWHRQS) are extracellular. Residues 78–98 (IVVSFLLLLAVLIATYYVEGV) form a helical membrane-spanning segment. Topologically, residues 99 to 109 (HQQYVQRIEKQ) are cytoplasmic. Residues 110–130 (FLLYAYWIGLGILSSVGLGTG) traverse the membrane as a helical segment. At 131–250 (LHTFLLYLGP…ASRAKLAVQK (120 aa)) the chain is on the extracellular side. The segment at 173-316 (GTEGTISLWS…FVIITFSKHI (144 aa)) is VTT domain. A helical transmembrane segment spans residues 251–271 (LVQKVGFFGILACASIPNPLF). The Cytoplasmic portion of the chain corresponds to 272–273 (DL). A helical membrane pass occupies residues 274–294 (AGITCGHFLVPFWTFFGATLI). Topologically, residues 295–305 (GKAIIKMHIQK) are extracellular. Residues 306–326 (IFVIITFSKHIVEQMVAFIGA) form a helical membrane-spanning segment. Residues 327–363 (VPGIGPSLQKPFQEYLEAQRQKLHHKSEMGTPQGENW) are Cytoplasmic-facing. A helical transmembrane segment spans residues 364 to 384 (LSWMFEKLVVVMVCYFILSII). The Extracellular portion of the chain corresponds to 385 to 406 (NSMAQSYAKRIQQRLNSEEKTK).

Belongs to the VMP1 family. As to quaternary structure, interacts with BECN1. Interacts with TJP1. Interacts with TP53INP2. Interacts with TMEM41B. Interacts with ATP2A2, PLN and SLN; competes with PLN and SLN to prevent them from forming an inhibitory complex with ATP2A2. Interacts with ATG2A.

The protein resides in the endoplasmic reticulum-Golgi intermediate compartment membrane. It localises to the cell membrane. Its subcellular location is the vacuole membrane. It is found in the endoplasmic reticulum membrane. It catalyses the reaction a 1,2-diacyl-sn-glycero-3-phospho-L-serine(in) = a 1,2-diacyl-sn-glycero-3-phospho-L-serine(out). It carries out the reaction cholesterol(in) = cholesterol(out). The catalysed reaction is a 1,2-diacyl-sn-glycero-3-phosphocholine(in) = a 1,2-diacyl-sn-glycero-3-phosphocholine(out). The enzyme catalyses a 1,2-diacyl-sn-glycero-3-phosphoethanolamine(in) = a 1,2-diacyl-sn-glycero-3-phosphoethanolamine(out). Phospholipid scramblase involved in lipid homeostasis and membrane dynamics processes. Has phospholipid scramblase activity toward cholesterol and phosphatidylserine, as well as phosphatidylethanolamine and phosphatidylcholine. Required for autophagosome formation: participates in early stages of autophagosome biogenesis at the endoplasmic reticulum (ER) membrane by reequilibrating the leaflets of the ER as lipids are extracted by ATG2 (ATG2A or ATG2B) to mediate autophagosome assembly. Regulates ATP2A2 activity to control ER-isolation membrane contacts for autophagosome formation. In addition to autophagy, involved in other processes in which phospholipid scramblase activity is required. Modulates ER contacts with lipid droplets, mitochondria and endosomes. Plays an essential role in formation of cell junctions. Upon stress such as bacterial and viral infection, promotes formation of cytoplasmic vacuoles followed by cell death. Involved in the cytoplasmic vacuolization of acinar cells during the early stage of acute pancreatitis. Its function is as follows. (Microbial infection) Host factor required for infection by all flaviviruses tested such as Zika virus and Yellow fever virus. Probably required post-entry of the virus to facilitate the ER membrane remodeling necessary to form replication organelles. The chain is Vacuole membrane protein 1 from Homo sapiens (Human).